The primary structure comprises 437 residues: Serine--tRNA ligase (437 aa).

244–246 serves as a coordination point for L-serine; that stretch reads TAE. ATP is bound at residue 275-277; it reads RSE. L-serine is bound at residue E298. 362–365 serves as a coordination point for ATP; the sequence is EISS. S397 serves as a coordination point for L-serine.

The protein belongs to the class-II aminoacyl-tRNA synthetase family. Type-1 seryl-tRNA synthetase subfamily. Homodimer. The tRNA molecule binds across the dimer.

The protein resides in the cytoplasm. It carries out the reaction tRNA(Ser) + L-serine + ATP = L-seryl-tRNA(Ser) + AMP + diphosphate + H(+). The enzyme catalyses tRNA(Sec) + L-serine + ATP = L-seryl-tRNA(Sec) + AMP + diphosphate + H(+). Its pathway is aminoacyl-tRNA biosynthesis; selenocysteinyl-tRNA(Sec) biosynthesis; L-seryl-tRNA(Sec) from L-serine and tRNA(Sec): step 1/1. In terms of biological role, catalyzes the attachment of serine to tRNA(Ser). Is also able to aminoacylate tRNA(Sec) with serine, to form the misacylated tRNA L-seryl-tRNA(Sec), which will be further converted into selenocysteinyl-tRNA(Sec). The polypeptide is Serine--tRNA ligase (Nitrosomonas europaea (strain ATCC 19718 / CIP 103999 / KCTC 2705 / NBRC 14298)).